The following is a 209-amino-acid chain: Ribosomal RNA small subunit methyltransferase G (209 aa).

Residues Gly71, Phe76, 122–123 (AE), and Arg135 contribute to the S-adenosyl-L-methionine site.

This sequence belongs to the methyltransferase superfamily. RNA methyltransferase RsmG family.

The protein localises to the cytoplasm. Its function is as follows. Specifically methylates the N7 position of a guanine in 16S rRNA. The polypeptide is Ribosomal RNA small subunit methyltransferase G (Flavobacterium johnsoniae (strain ATCC 17061 / DSM 2064 / JCM 8514 / BCRC 14874 / CCUG 350202 / NBRC 14942 / NCIMB 11054 / UW101) (Cytophaga johnsonae)).